The primary structure comprises 153 residues: Holo-[acyl-carrier-protein] synthase (153 aa).

Residues aspartate 24 and glutamate 78 each coordinate Mg(2+).

The protein belongs to the P-Pant transferase superfamily. AcpS family. The cofactor is Mg(2+).

It localises to the cytoplasm. It carries out the reaction apo-[ACP] + CoA = holo-[ACP] + adenosine 3',5'-bisphosphate + H(+). Transfers the 4'-phosphopantetheine moiety from coenzyme A to a Ser of acyl-carrier-protein. The chain is Holo-[acyl-carrier-protein] synthase from Bordetella pertussis (strain Tohama I / ATCC BAA-589 / NCTC 13251).